A 295-amino-acid polypeptide reads, in one-letter code: Aspartate carbamoyltransferase catalytic subunit (295 aa).

Carbamoyl phosphate is bound by residues arginine 49 and threonine 50. Lysine 77 contributes to the L-aspartate binding site. Carbamoyl phosphate-binding residues include arginine 99, histidine 127, and glutamine 130. L-aspartate-binding residues include arginine 161 and arginine 212. Carbamoyl phosphate-binding residues include glycine 251 and proline 252.

Belongs to the aspartate/ornithine carbamoyltransferase superfamily. ATCase family. In terms of assembly, heterododecamer (2C3:3R2) of six catalytic PyrB chains organized as two trimers (C3), and six regulatory PyrI chains organized as three dimers (R2).

The catalysed reaction is carbamoyl phosphate + L-aspartate = N-carbamoyl-L-aspartate + phosphate + H(+). It functions in the pathway pyrimidine metabolism; UMP biosynthesis via de novo pathway; (S)-dihydroorotate from bicarbonate: step 2/3. Functionally, catalyzes the condensation of carbamoyl phosphate and aspartate to form carbamoyl aspartate and inorganic phosphate, the committed step in the de novo pyrimidine nucleotide biosynthesis pathway. The chain is Aspartate carbamoyltransferase catalytic subunit from Campylobacter jejuni subsp. jejuni serotype O:2 (strain ATCC 700819 / NCTC 11168).